We begin with the raw amino-acid sequence, 601 residues long: ATP-dependent rRNA helicase SPB4 (601 aa).

Positions 14–42 (LAWSQASLQPWIHDAIDSLGFRSMTPVQA) match the Q motif motif. Residues 45–228 (IPLFCGNKDV…RTGMSNPVKI (184 aa)) form the Helicase ATP-binding domain. An ATP-binding site is contributed by 58 to 65 (AVTGSGKT). Positions 176-179 (DEAD) match the DEAD box motif. One can recognise a Helicase C-terminal domain in the interval 257-419 (VLINMLSTLQ…AYKAFSKNLR (163 aa)). Positions 507–575 (KEKIRLETME…QIMNESSDEE (69 aa)) form a coiled coil. The span at 532–554 (LKVKNEAWSSKNEKKEGKQERRE) shows a compositional bias: basic and acidic residues. Residues 532–576 (LKVKNEAWSSKNEKKEGKQERREKMKRKREAIEKQIMNESSDEET) form a disordered region.

This sequence belongs to the DEAD box helicase family. DDX55/SPB4 subfamily. As to quaternary structure, component of pre-60S ribosomal complexes.

Its subcellular location is the nucleus. The protein resides in the nucleolus. The enzyme catalyses ATP + H2O = ADP + phosphate + H(+). Functionally, ATP-binding RNA helicase involved in the biogenesis of 60S ribosomal subunits. Binds 90S pre-ribosomal particles and dissociates from pre-60S ribosomal particles after processing of 27SB pre-rRNA. Required for the normal formation of 18S rRNA through the processing of pre-rRNAs at sites A0, A1 and A2, and the normal formation of 25S and 5.8S rRNAs through the processing of pre-rRNAs at sites C1 and C2. This is ATP-dependent rRNA helicase SPB4 from Meyerozyma guilliermondii (strain ATCC 6260 / CBS 566 / DSM 6381 / JCM 1539 / NBRC 10279 / NRRL Y-324) (Yeast).